The chain runs to 96 residues: Invertase 7 (96 aa).

Residues 1 to 19 (MLLQAFIFLLAGFAAKISA) form the signal peptide. An N-linked (GlcNAc...) asparagine glycan is attached at Asn-23. Substrate-binding positions include 39–42 (WMND) and Gln-60. Asp-42 is a catalytic residue. Residues Asn-64 and Asn-76 are each glycosylated (N-linked (GlcNAc...) asparagine).

It belongs to the glycosyl hydrolase 32 family.

The catalysed reaction is Hydrolysis of terminal non-reducing beta-D-fructofuranoside residues in beta-D-fructofuranosides.. This chain is Invertase 7 (SUC7), found in Saccharomyces cerevisiae (Baker's yeast).